Here is a 353-residue protein sequence, read N- to C-terminus: UPF0283 membrane protein YcjF (353 aa).

Positions 1–19 are enriched in basic and acidic residues; sequence MSEPLKPRIDFAEPLKEEP. The disordered stretch occupies residues 1 to 35; sequence MSEPLKPRIDFAEPLKEEPTSAFKAQQTFSEAESR. 3 consecutive transmembrane segments (helical) span residues 70–90, 100–120, and 213–233; these read MVMG…VQWT, VALG…GSVV, and ESTL…FIAW.

This sequence belongs to the UPF0283 family.

The protein localises to the cell inner membrane. The protein is UPF0283 membrane protein YcjF of Salmonella paratyphi B (strain ATCC BAA-1250 / SPB7).